The primary structure comprises 478 residues: Protein FAM83E (478 aa).

A DUF1669 region spans residues 1 to 293 (MAASQLAALE…LYAASCPLPP (293 aa)). Disordered stretches follow at residues 292–334 (PPAP…PLAH), 359–436 (RART…LPPA), and 452–478 (DATF…GGQP). The segment covering 309–319 (RSPHRVSRRRS) has biased composition (basic residues). Residues 379–388 (RLSQLSGSSD) are compositionally biased toward polar residues.

The protein belongs to the FAM83 family. As to quaternary structure, directly interacts (via DUF1669) with CSNK1A1, CSNK1A1L, CSNK1D and CSNK1E. May interact with RAF1.

The protein localises to the cytoplasm. It is found in the perinuclear region. In terms of biological role, may play a role in MAPK signaling. The protein is Protein FAM83E of Homo sapiens (Human).